Consider the following 718-residue polypeptide: Polyribonucleotide nucleotidyltransferase (718 aa).

Aspartate 493 and aspartate 499 together coordinate Mg(2+). Positions 560–619 constitute a KH domain; that stretch reads PRVIKKQIDPDKIRNVIGPGGKMINKIIDETGVKIDIEPDGLIYISSSDAEQAEQAIKAI. Residues 629 to 697 enclose the S1 motif domain; the sequence is GEVYLGKVVR…ERGRINLSRK (69 aa). Residues 695–718 are disordered; the sequence is SRKQALGEEDGKTNNDDKKSTKKT. Basic and acidic residues predominate over residues 699 to 718; sequence ALGEEDGKTNNDDKKSTKKT.

The protein belongs to the polyribonucleotide nucleotidyltransferase family. Mg(2+) is required as a cofactor.

The protein localises to the cytoplasm. It carries out the reaction RNA(n+1) + phosphate = RNA(n) + a ribonucleoside 5'-diphosphate. Functionally, involved in mRNA degradation. Catalyzes the phosphorolysis of single-stranded polyribonucleotides processively in the 3'- to 5'-direction. The protein is Polyribonucleotide nucleotidyltransferase of Natranaerobius thermophilus (strain ATCC BAA-1301 / DSM 18059 / JW/NM-WN-LF).